Here is a 234-residue protein sequence, read N- to C-terminus: MSILHVTILTVFPEMFPGTLGYSLAGQALHNNIWSYDIINIRDFGLTKHKNVDDKAYGGGDGLIMRPDVLGNVIEYALSLNHNTKIYYPSPRGSVFTQSFAKEMLKNKNIIFLCGRYEGIDERVIAEYNVKEISVGDYILSGGEIPTLTILDCLIRLLPGVLINQNTLSSESFEKDGEFQGGLECDLYTRPKIWHGRAVPSILLSGNRKLINNWRKEQSRMITKLRRPELLKDL.

Residues Gly115 and 135–140 (VGDYIL) contribute to the S-adenosyl-L-methionine site.

The protein belongs to the RNA methyltransferase TrmD family. As to quaternary structure, homodimer.

It is found in the cytoplasm. The catalysed reaction is guanosine(37) in tRNA + S-adenosyl-L-methionine = N(1)-methylguanosine(37) in tRNA + S-adenosyl-L-homocysteine + H(+). Functionally, specifically methylates guanosine-37 in various tRNAs. The chain is tRNA (guanine-N(1)-)-methyltransferase from Rickettsia typhi (strain ATCC VR-144 / Wilmington).